Reading from the N-terminus, the 95-residue chain is Nucleoid-associated protein MARTH_orf159 (95 aa).

Belongs to the YbaB/EbfC family. As to quaternary structure, homodimer.

Its subcellular location is the cytoplasm. It localises to the nucleoid. Functionally, binds to DNA and alters its conformation. May be involved in regulation of gene expression, nucleoid organization and DNA protection. This chain is Nucleoid-associated protein MARTH_orf159, found in Metamycoplasma arthritidis (strain 158L3-1) (Mycoplasma arthritidis).